The primary structure comprises 184 residues: Thylakoid membrane protein slr0575 (184 aa).

2 consecutive transmembrane segments (helical) span residues 5–25 and 31–51; these read ISLAAVGLTVGGILTITGFVA and ATLNLAGFFYGIPLVLGGLAL.

It localises to the cellular thylakoid membrane. This Synechocystis sp. (strain ATCC 27184 / PCC 6803 / Kazusa) protein is Thylakoid membrane protein slr0575.